The primary structure comprises 113 residues: Prefoldin subunit beta (113 aa).

The protein belongs to the prefoldin subunit beta family. As to quaternary structure, heterohexamer of two alpha and four beta subunits.

The protein localises to the cytoplasm. Its function is as follows. Molecular chaperone capable of stabilizing a range of proteins. Seems to fulfill an ATP-independent, HSP70-like function in archaeal de novo protein folding. This chain is Prefoldin subunit beta (pfdB), found in Methanocaldococcus jannaschii (strain ATCC 43067 / DSM 2661 / JAL-1 / JCM 10045 / NBRC 100440) (Methanococcus jannaschii).